A 220-amino-acid chain; its full sequence is ATP synthase subunit delta (220 aa).

This sequence belongs to the ATPase delta chain family. As to quaternary structure, F-type ATPases have 2 components, F(1) - the catalytic core - and F(0) - the membrane proton channel. F(1) has five subunits: alpha(3), beta(3), gamma(1), delta(1), epsilon(1). F(0) has three main subunits: a(1), b(2) and c(10-14). The alpha and beta chains form an alternating ring which encloses part of the gamma chain. F(1) is attached to F(0) by a central stalk formed by the gamma and epsilon chains, while a peripheral stalk is formed by the delta and b chains.

It is found in the cell inner membrane. Its function is as follows. F(1)F(0) ATP synthase produces ATP from ADP in the presence of a proton or sodium gradient. F-type ATPases consist of two structural domains, F(1) containing the extramembraneous catalytic core and F(0) containing the membrane proton channel, linked together by a central stalk and a peripheral stalk. During catalysis, ATP synthesis in the catalytic domain of F(1) is coupled via a rotary mechanism of the central stalk subunits to proton translocation. Functionally, this protein is part of the stalk that links CF(0) to CF(1). It either transmits conformational changes from CF(0) to CF(1) or is implicated in proton conduction. This is ATP synthase subunit delta from Gluconobacter oxydans (strain 621H) (Gluconobacter suboxydans).